The primary structure comprises 309 residues: Homoserine kinase (309 aa).

An ATP-binding site is contributed by 88 to 98 (PLARGLGSSAA).

Belongs to the GHMP kinase family. Homoserine kinase subfamily.

It localises to the cytoplasm. The enzyme catalyses L-homoserine + ATP = O-phospho-L-homoserine + ADP + H(+). Its pathway is amino-acid biosynthesis; L-threonine biosynthesis; L-threonine from L-aspartate: step 4/5. Catalyzes the ATP-dependent phosphorylation of L-homoserine to L-homoserine phosphate. This is Homoserine kinase from Halalkalibacterium halodurans (strain ATCC BAA-125 / DSM 18197 / FERM 7344 / JCM 9153 / C-125) (Bacillus halodurans).